Consider the following 442-residue polypeptide: Histidine--tRNA ligase (442 aa).

Belongs to the class-II aminoacyl-tRNA synthetase family. In terms of assembly, homodimer.

Its subcellular location is the cytoplasm. The catalysed reaction is tRNA(His) + L-histidine + ATP = L-histidyl-tRNA(His) + AMP + diphosphate + H(+). The chain is Histidine--tRNA ligase from Wolinella succinogenes (strain ATCC 29543 / DSM 1740 / CCUG 13145 / JCM 31913 / LMG 7466 / NCTC 11488 / FDC 602W) (Vibrio succinogenes).